The chain runs to 312 residues: R2-like ligand binding oxidase (312 aa).

Mn(2+) is bound by residues Glu-68, Glu-101, and His-104. Positions 71-162 (VTQDIQPFMA…AAQVRASATY (92 aa)) form a cross-link, 3-(O4'-tyrosyl)-valine (Val-Tyr). Glu-101 contacts Fe cation. The Fe cation site is built by Glu-167, Glu-202, and His-205.

The protein belongs to the ribonucleoside diphosphate reductase small chain family. R2-like ligand binding oxidase subfamily. As to quaternary structure, homodimer. Fe cation serves as cofactor. Requires Mn(2+) as cofactor.

In terms of biological role, probable oxidase that might be involved in lipid metabolism. This is R2-like ligand binding oxidase from Mycobacterium sp. (strain JLS).